We begin with the raw amino-acid sequence, 363 residues long: Phosphoserine aminotransferase (363 aa).

An L-glutamate-binding site is contributed by Arg-41. Residues 75-76, Trp-100, Thr-155, Asp-175, and Gln-198 contribute to the pyridoxal 5'-phosphate site; that span reads AS. N6-(pyridoxal phosphate)lysine is present on Lys-199. Pyridoxal 5'-phosphate is bound at residue 239–240; the sequence is NT.

Belongs to the class-V pyridoxal-phosphate-dependent aminotransferase family. SerC subfamily. As to quaternary structure, homodimer. Pyridoxal 5'-phosphate serves as cofactor.

Its subcellular location is the cytoplasm. The enzyme catalyses O-phospho-L-serine + 2-oxoglutarate = 3-phosphooxypyruvate + L-glutamate. It catalyses the reaction 4-(phosphooxy)-L-threonine + 2-oxoglutarate = (R)-3-hydroxy-2-oxo-4-phosphooxybutanoate + L-glutamate. It participates in amino-acid biosynthesis; L-serine biosynthesis; L-serine from 3-phospho-D-glycerate: step 2/3. Its function is as follows. Catalyzes the reversible conversion of 3-phosphohydroxypyruvate to phosphoserine and of 3-hydroxy-2-oxo-4-phosphonooxybutanoate to phosphohydroxythreonine. In Streptococcus suis (strain 98HAH33), this protein is Phosphoserine aminotransferase.